The chain runs to 113 residues: Mini zinc finger protein 3 (113 aa).

Residues 24–83 form a ZF-HD dimerization-type; degenerate zinc finger; the sequence is YGECRRNHAASTGGHAVDGCREFIAAEDGGGGNSTGAVGVAAAALKCAACGCHRSFHRRV. Residues 93 to 113 are disordered; it reads DCDSGDTSSSSPSSSSSLSSE. Residues 97-113 are compositionally biased toward low complexity; the sequence is GDTSSSSPSSSSSLSSE.

In terms of assembly, homo- and heterodimers.

The protein localises to the cytoplasm. Inhibits zinc finger homeodomain (ZHD) transcription factors, by interacting with them to prevent both their nuclear localization and their DNA-binding properties. This is Mini zinc finger protein 3 (MIF3) from Oryza sativa subsp. indica (Rice).